Consider the following 485-residue polypeptide: WAS/WASL-interacting protein family member 3 (485 aa).

Pro residues predominate over residues 1-41 (MPVPPPPPPPPPPPPPPPPPLGAPPPPPLGAPPPPPPPGPP). The tract at residues 1 to 485 (MPVPPPPPPP…QLSLKALPVR (485 aa)) is disordered. Short sequence motifs (profilin-binding motif) lie at residues 3-8 (VPPPPP), 11-16 (PPPPPP), and 31-36 (APPPPP). One can recognise a WH2 domain in the interval 56-73 (GRSALLADIQQGTRLRKV). An Asymmetric dimethylarginine modification is found at Arg-57. The short motif at 69–72 (RLRK) is the RLRK element. Phosphoserine is present on Ser-161. The span at 176-203 (PVPPRPSVPAPPPPTPPPPPPPPLPPAS) shows a compositional bias: pro residues. Ser-211 carries the phosphoserine modification. Residues 212-246 (PPAPPTKVNPSVVPPPLPCAPPLPPPPPTPPPLPP) show a composition bias toward pro residues. Residues 247-262 (ASALSDKAVRPQLAPL) are compositionally biased toward low complexity. 2 stretches are compositionally biased toward pro residues: residues 263–278 (HLPPIPPPLPLLPPCG) and 296–312 (PPAPPPPPPPPPPPPLP). A Phosphoserine modification is found at Ser-392. A compositionally biased stretch (polar residues) spans 392-405 (SPTTELSSKSQQPG). Residues 415 to 439 (AIDDFESKFTFHSMEDFPPPDEYKP) show a composition bias toward basic and acidic residues. The WASP-binding motif motif lies at 424–448 (TFHSMEDFPPPDEYKPCQKIYPSKV).

As to quaternary structure, interacts with WASL, and monomeric and filamentous actin. As to expression, isoform 1 is expressed in brain and testis and isoform 2 is expressed only in brain (at protein level).

The protein resides in the cytoplasm. In terms of biological role, may be a regulator of cytoskeletal organization (Potential). May have a role in spermatogenesis. The sequence is that of WAS/WASL-interacting protein family member 3 (Wipf3) from Mus musculus (Mouse).